The primary structure comprises 388 residues: Salivary protein Tsal2A (388 aa).

An N-terminal signal peptide occupies residues 1–18 (MSLLYGLLILAFTRSCLV). Asn-260 carries an N-linked (GlcNAc...) asparagine glycan.

The protein belongs to the DNA/RNA non-specific endonuclease family. The cofactor is a divalent metal cation. In terms of tissue distribution, saliva (at protein level).

Its subcellular location is the secreted. Binds double-stranded DNA (dsDNA) with high affinity. Binds double-stranded RNA. Binds single-stranded DNA with lower affinity and with a preference for purine-rich sequences. Shows residual nuclease activity for dsDNA. Facilitates blood meal intake by lowering the local viscosity created by the release of host DNA. The polypeptide is Salivary protein Tsal2A (Glossina morsitans morsitans (Savannah tsetse fly)).